A 393-amino-acid chain; its full sequence is Phosphatidate cytidylyltransferase (393 aa).

The next 8 helical transmembrane spans lie at 49–69, 73–93, 108–128, 141–161, 171–191, 198–218, 237–257, and 290–310; these read NFFR…WISV, IYSF…IIGI, IILG…IMMM, LSFV…ASLR, LFAL…CAIF, FWFV…YVVG, GFIG…HLHV, and IHII…GFLA.

The protein belongs to the CDS family.

The protein localises to the membrane. It catalyses the reaction a 1,2-diacyl-sn-glycero-3-phosphate + CTP + H(+) = a CDP-1,2-diacyl-sn-glycerol + diphosphate. It functions in the pathway phospholipid metabolism; CDP-diacylglycerol biosynthesis; CDP-diacylglycerol from sn-glycerol 3-phosphate: step 3/3. This Encephalitozoon cuniculi (strain GB-M1) (Microsporidian parasite) protein is Phosphatidate cytidylyltransferase (CDS1).